A 1242-amino-acid polypeptide reads, in one-letter code: DNA polymerase catalytic subunit (1242 aa).

3 disordered regions span residues 14 to 38 (GAVA…RPPQ), 644 to 665 (LQSA…SSSS), and 1109 to 1162 (APQG…RKPP). Over residues 653 to 665 (GVSPGSGSNSSSS) the composition is skewed to low complexity. The segment covering 1111–1125 (QGSSDNGDSVTTGVV) has biased composition (polar residues). Over residues 1145–1155 (ESNRRGGEPAK) the composition is skewed to basic and acidic residues.

Belongs to the DNA polymerase type-B family. Forms a complex with the ssDNA-binding protein UL57, the DNA polymerase processivity factor UL44, and the alkaline exonuclease UL98. Interacts with the putative helicase-primase complex composed of UL70, UL102 and UL105 proteins; these interactions may coordinate leading and lagging strand DNA synthesis at the replication fork.

Its subcellular location is the host nucleus. The enzyme catalyses DNA(n) + a 2'-deoxyribonucleoside 5'-triphosphate = DNA(n+1) + diphosphate. In terms of biological role, replicates viral genomic DNA in the late phase of lytic infection, producing long concatemeric DNA. The replication complex is composed of six viral proteins: the DNA polymerase, processivity factor, primase, primase-associated factor, helicase, and ssDNA-binding protein. The chain is DNA polymerase catalytic subunit (UL54) from Homo sapiens (Human).